A 217-amino-acid chain; its full sequence is Small ribosomal subunit protein uS3 (217 aa).

The region spanning 38-106 is the KH type-2 domain; the sequence is IRKYIEQRLA…RVHINIIEIK (69 aa).

The protein belongs to the universal ribosomal protein uS3 family. In terms of assembly, part of the 30S ribosomal subunit. Forms a tight complex with proteins S10 and S14.

In terms of biological role, binds the lower part of the 30S subunit head. Binds mRNA in the 70S ribosome, positioning it for translation. The sequence is that of Small ribosomal subunit protein uS3 from Lactiplantibacillus plantarum (strain ATCC BAA-793 / NCIMB 8826 / WCFS1) (Lactobacillus plantarum).